We begin with the raw amino-acid sequence, 142 residues long: Galactose-6-phosphate isomerase subunit LacA (142 aa).

It belongs to the LacAB/RpiB family. As to quaternary structure, heteromultimeric protein consisting of LacA and LacB.

The enzyme catalyses aldehydo-D-galactose 6-phosphate = keto-D-tagatose 6-phosphate. The protein operates within carbohydrate metabolism; D-galactose 6-phosphate degradation; D-tagatose 6-phosphate from D-galactose 6-phosphate: step 1/1. In Staphylococcus aureus (strain JH9), this protein is Galactose-6-phosphate isomerase subunit LacA.